The following is a 718-amino-acid chain: Tegument protein UL46 (718 aa).

Disordered regions lie at residues 433-510 (SAGP…EPPA) and 581-611 (TADD…DDES). The span at 444–454 (GPGGHRAGGGT) shows a compositional bias: gly residues. A compositionally biased stretch (basic and acidic residues) spans 455 to 467 (CREKIQRARRDNE).

Belongs to the herpesviridae HHV-1 VP11/12 protein family. As to quaternary structure, interacts with VP16. Interacts with host LCK, PIK3R1, SHC1 AND GRB2; these interactions promote the activation of the PI3K/AKT pathway. Interacts with host YWHAB. Interacts with ICP0; this interaction targets UL46 for degradation by the proteasome. Interacts (via N-terminus) with host TMEM173. Interacts (via C-terminus) with host TBK1. Interacts with host DOK2. Post-translationally, phosphorylated by host LCK. The phosphorylation seems to be lymphocyte-specific.

Its subcellular location is the virion tegument. The protein localises to the host cytoplasm. It localises to the host cell membrane. In terms of biological role, plays a role in the activation of the host PI3K/AKT pathway to promote cell survival. Interacts with and activates host LCK and thereby recruits downstream partners SHC1, GRB2 and PI3KR1 in order to activate the PI3K pathway by phosphorylating host AKT on its activating residues. This mechanism is inhibited by the viral protein US3 that instead promotes incorporation of UL46 into virions. Plays a role in the inhibition of TMEM173/STING-mediated type I interferon production. Interacts with host DOK2 and induces its degradation. This immune evasion mechanism to inactivate T-cells may play an important role during pathogenesis. The sequence is that of Tegument protein UL46 from Homo sapiens (Human).